Consider the following 423-residue polypeptide: UPF0229 protein PFLU_5583 (423 aa).

Residues 64–109 (LHHGRGGKQTVVHPGNKEFTTGEHIQRPQGGGGGKGPGKAGNSGEG) form a disordered region. Gly residues predominate over residues 92 to 107 (QGGGGGKGPGKAGNSG).

Belongs to the UPF0229 family.

In Pseudomonas fluorescens (strain SBW25), this protein is UPF0229 protein PFLU_5583.